Reading from the N-terminus, the 91-residue chain is MSRSIKKGPFADAHLLKKVDEQQAAEKKQVIKTWSRRSTIFPSFVGLTIAVYDGRKHVPVFVTEDMVGHKLGEFVPTRTFRGHKADDKASK.

Belongs to the universal ribosomal protein uS19 family.

In terms of biological role, protein S19 forms a complex with S13 that binds strongly to the 16S ribosomal RNA. The chain is Small ribosomal subunit protein uS19 from Lactobacillus delbrueckii subsp. bulgaricus (strain ATCC 11842 / DSM 20081 / BCRC 10696 / JCM 1002 / NBRC 13953 / NCIMB 11778 / NCTC 12712 / WDCM 00102 / Lb 14).